The following is a 139-amino-acid chain: Cytochrome c-type biogenesis protein CcmE 2 (139 aa).

Topologically, residues 1 to 9 (MASLKKSRR) are cytoplasmic. A helical; Signal-anchor for type II membrane protein membrane pass occupies residues 10–30 (VRLILFSGVALVSATALIGYA). Residues 31-139 (MRDGIQFFRT…ELAEMEALRD (109 aa)) are Periplasmic-facing. Heme-binding residues include H122 and Y126.

The protein belongs to the CcmE/CycJ family.

The protein resides in the cell inner membrane. Functionally, heme chaperone required for the biogenesis of c-type cytochromes. Transiently binds heme delivered by CcmC and transfers the heme to apo-cytochromes in a process facilitated by CcmF and CcmH. This Ruegeria pomeroyi (strain ATCC 700808 / DSM 15171 / DSS-3) (Silicibacter pomeroyi) protein is Cytochrome c-type biogenesis protein CcmE 2.